The sequence spans 199 residues: Chaperone protein TorD (199 aa).

It belongs to the TorD/DmsD family. TorD subfamily.

The protein resides in the cytoplasm. Functionally, involved in the biogenesis of TorA. Acts on TorA before the insertion of the molybdenum cofactor and, as a result, probably favors a conformation of the apoenzyme that is competent for acquiring the cofactor. This Actinobacillus pleuropneumoniae serotype 3 (strain JL03) protein is Chaperone protein TorD.